We begin with the raw amino-acid sequence, 469 residues long: Citrate synthase, mitochondrial (469 aa).

A mitochondrion-targeting transit peptide spans 1 to 30 (MSFLTVSRLAPKLLNSKNATYFLVAARNAS). Catalysis depends on residues His-304 and His-350. Arg-359 serves as a coordination point for oxaloacetate. The active site involves Asp-405. The oxaloacetate site is built by Arg-431 and Arg-451.

This sequence belongs to the citrate synthase family. In terms of assembly, homodimer.

The protein localises to the mitochondrion matrix. The enzyme catalyses oxaloacetate + acetyl-CoA + H2O = citrate + CoA + H(+). Its pathway is carbohydrate metabolism; tricarboxylic acid cycle; isocitrate from oxaloacetate: step 1/2. In terms of biological role, key enzyme of the Krebs tricarboxylic acid cycle which catalyzes the synthesis of citrate from acetyl coenzyme A and oxaloacetate. The protein is Citrate synthase, mitochondrial (cs) of Kajikia audax (Striped marlin).